Here is a 348-residue protein sequence, read N- to C-terminus: Histidinol-phosphate aminotransferase (348 aa).

The disordered stretch occupies residues 1–31 (MLPTRDCVRQTPAYTPGEQPQTAGFTKLNTN). The segment covering 18–31 (EQPQTAGFTKLNTN) has biased composition (polar residues). At lysine 207 the chain carries N6-(pyridoxal phosphate)lysine.

It belongs to the class-II pyridoxal-phosphate-dependent aminotransferase family. Histidinol-phosphate aminotransferase subfamily. Homodimer. The cofactor is pyridoxal 5'-phosphate.

It carries out the reaction L-histidinol phosphate + 2-oxoglutarate = 3-(imidazol-4-yl)-2-oxopropyl phosphate + L-glutamate. The protein operates within amino-acid biosynthesis; L-histidine biosynthesis; L-histidine from 5-phospho-alpha-D-ribose 1-diphosphate: step 7/9. The chain is Histidinol-phosphate aminotransferase from Microcystis aeruginosa (strain NIES-843 / IAM M-2473).